The following is a 611-amino-acid chain: Brain-enriched guanylate kinase-associated protein (611 aa).

The residue at position 156 (tyrosine 156) is a Phosphotyrosine. Phosphoserine occurs at positions 219, 248, and 265. Threonine 268 carries the phosphothreonine modification. A phosphoserine mark is found at serine 284, serine 364, and serine 391. Arginine 399 is subject to Asymmetric dimethylarginine. A phosphoserine mark is found at serine 474, serine 484, serine 494, serine 496, serine 519, serine 521, and serine 525. The tract at residues 520–611 is disordered; the sequence is LSPSRSADPL…KAQLYGTLLN (92 aa). A compositionally biased stretch (basic and acidic residues) spans 554-563; sequence EPEHGSRDSL. Phosphoserine occurs at positions 571 and 581.

In terms of assembly, interacts with DLG4 and DLGAP1 and forms a ternary complex. As to expression, brain-specific. Expressed in neurons and rather enriched at synaptic junctions.

The protein resides in the cytoplasm. It is found in the membrane. May sustain the structure of the postsynaptic density (PSD). The polypeptide is Brain-enriched guanylate kinase-associated protein (Begain) (Rattus norvegicus (Rat)).